The sequence spans 302 residues: Probable E3 ubiquitin-protein ligase RZFP34 (302 aa).

The CHY-type zinc-finger motif lies at 54–130; it reads EGIMQYGCAH…VRQVCISCGV (77 aa). Cys61, His63, Cys74, Cys75, Cys81, Cys84, His85, His100, Cys112, Cys115, Cys125, Cys128, Cys137, Cys140, His153, Cys154, Cys157, Cys160, His170, Cys171, Cys174, Cys177, His186, and Cys188 together coordinate Zn(2+). A CTCHY-type zinc finger spans residues 132–196; sequence MGKYFCEVCK…ACVEGAMHHD (65 aa). The segment at 197 to 240 adopts an RING-type; atypical zinc-finger fold; it reads CPICFEYLFESTNDVSVLPCGHTIHVKCLREMEEHCQFACPLCS.

Its subcellular location is the nucleus. It catalyses the reaction S-ubiquitinyl-[E2 ubiquitin-conjugating enzyme]-L-cysteine + [acceptor protein]-L-lysine = [E2 ubiquitin-conjugating enzyme]-L-cysteine + N(6)-ubiquitinyl-[acceptor protein]-L-lysine.. It functions in the pathway protein modification; protein ubiquitination. In terms of biological role, possesses transactivation activity in yeast cells. Involved in the regulation of stomatal aperture. May modulate the expression of genes that control stomata opening during heat shock or drought stress. This chain is Probable E3 ubiquitin-protein ligase RZFP34, found in Oryza sativa subsp. japonica (Rice).